Reading from the N-terminus, the 381-residue chain is D-rhamnosyltransferase WbpZ (381 aa).

Residues Glu-19, His-116, Lys-206, and Val-252 each contribute to the substrate site.

Belongs to the glycosyltransferase group 1 family. Glycosyltransferase 4 subfamily.

It is found in the cytoplasm. The enzyme catalyses GDP-alpha-D-rhamnose + N-acetyl-alpha-D-glucosaminyl-di-trans,octa-cis-undecaprenyl diphosphate = alpha-D-rhamnosyl-(1-&gt;3)-N-acetyl-alpha-D-glucosaminyl-1-diphospho-di-trans,octa-cis-undecaprenol + GDP + H(+). It carries out the reaction GDP-alpha-D-rhamnose + N-acetyl-alpha-D-galactosaminyl-di-trans,octa-cis-undecaprenyl diphosphate = alpha-D-rhamnosyl-(1-&gt;3)-N-acetyl-alpha-D-galactosaminyl-1-diphospho-di-trans,octa-cis-undecaprenol + GDP + H(+). It catalyses the reaction N-acetyl-alpha-D-glucosaminyl-di-trans,octa-cis-undecaprenyl diphosphate + GDP-alpha-D-mannose = alpha-D-mannosyl-(1-&gt;3)-N-acetyl-alpha-D-glucosaminyl-di-trans,octa-cis-undecaprenyl diphosphate + GDP + H(+). The catalysed reaction is N-acetyl-alpha-D-galactosaminyl-di-trans,octa-cis-undecaprenyl diphosphate + GDP-alpha-D-mannose = alpha-D-mannosyl-(1-&gt;3)-N-acetyl-alpha-D-galctosaminyl-1-diphospho-di-trans,octa-cis-undecaprenol + GDP + H(+). Its pathway is lipopolysaccharide biosynthesis; LPS oligosaccharide biosynthesis. Not activated by dithiothreitol (DTT) using GlcNAc-alpha-PO(3)-PO(3)-phenylundecyl (GlcNAc-PP-PhU) as acceptor substrate. 0.25% Triton X-100 and 0.125% NP-40 increases the activity 2.5-fold and 2-fold, respectively. 0.125% octyl glucoside has little effect on activity. Slightly increased activity with Mg(2+) and Pb(2+), while no effect with Mn(2+), Co(2+), Ni(2+), Cu(2+), Zn(2+), Ca(2+) or EDTA. Not inhibited by N-butyryl-galactosamine-alpha-benzyl or N-butyryl-glucosamine-beta-benzyl. Bis-imidazolium salts having aliphatic spacer groups with 4 or 6 carbons have little effect on activity, but spacer groups of 18-22 aliphatic carbons inhibit activity, with the most potent inhibitor being bis-imidazolium salt having a 20-carbon chain spacer length. Functionally, non-processive alpha-1,3-D-rhamnosyltransferase. Catalyzes the transfer of one D-rhamnose (D-Rha) residue from donor substrate GDP-D-Rha in alpha-1-3 linkage to both GlcNAc- and GalNAc-diphosphate-lipid acceptor substrates. Is also able to transfer D-mannose (D-Man) to these acceptors at a lower level. Nucleotide sugars GDP-D-Rha, GDP-Fuc, UDP-Gal, UDP-GalNAc, UDP-GlcNAc and CMP-sialic acid cannot act as donor substrates. Only compounds with a diphosphate as the aglycone group can act as acceptor substrates. No activity is detected with compounds containing a diphosphate mimic. Fluorescent undecyl-anthracenyl group-containing compounds, such as GlcNAc-PO(3)-PO(3)-AnthrU and GalNAc-PO(3)-PO(3)-AnthrU, are also good acceptor substrates. Involved in the biosynthesis of the common polysaccharide antigen (CPA), also called A band, which is one of the two major cell surface O-antigens of the P.aeruginosa lipopolysaccharide. Involved in susceptibility to antibiotic colistin. This chain is D-rhamnosyltransferase WbpZ, found in Pseudomonas aeruginosa (strain ATCC 15692 / DSM 22644 / CIP 104116 / JCM 14847 / LMG 12228 / 1C / PRS 101 / PAO1).